Consider the following 968-residue polypeptide: RNA polymerase-associated protein RapA (968 aa).

A Helicase ATP-binding domain is found at 164–334; it reads DVGRRHAPRV…FARLRLLDPN (171 aa). 177–184 lines the ATP pocket; that stretch reads DEVGLGKT. The short motif at 280 to 283 is the DEAH box element; sequence DEAH. A Helicase C-terminal domain is found at 490-662; that stretch reads RVEWLMGYLT…YLASPDQTEG (173 aa).

Belongs to the SNF2/RAD54 helicase family. RapA subfamily. In terms of assembly, interacts with the RNAP. Has a higher affinity for the core RNAP than for the holoenzyme. Its ATPase activity is stimulated by binding to RNAP.

Its function is as follows. Transcription regulator that activates transcription by stimulating RNA polymerase (RNAP) recycling in case of stress conditions such as supercoiled DNA or high salt concentrations. Probably acts by releasing the RNAP, when it is trapped or immobilized on tightly supercoiled DNA. Does not activate transcription on linear DNA. Probably not involved in DNA repair. In Escherichia coli O139:H28 (strain E24377A / ETEC), this protein is RNA polymerase-associated protein RapA.